The sequence spans 1219 residues: FK506-binding protein 15 (1219 aa).

The residue at position 1 (methionine 1) is an N-acetylmethionine. A phosphoserine mark is found at serine 14 and serine 23. The tract at residues 41–66 (YTAPKQPKKGQGTAATGNQATPKTAP) is disordered. Residues 53–66 (TAATGNQATPKTAP) are compositionally biased toward polar residues. Positions 72 to 169 (PTILVATAVH…AVEFNKQVCI (98 aa)) are important for function in growth cone organization. Position 92 is an N6-acetyllysine (lysine 92). One can recognise a PPIase FKBP-type domain in the interval 197-290 (GDSLEVAYTG…VFEVEVRRVK (94 aa)). A disordered region spans residues 294 to 349 (DSGSDGHSVSSRDSAAPSPIPGADNLSADPVVSPPTSIPFKSGEPALRTKSNSLSE). Serine 307, serine 311, serine 326, serine 344, serine 346, and serine 356 each carry phosphoserine. A disordered region spans residues 381–433 (PQLDSNDSEIEDVNTLQGGGQPVVTPSVQPSLHPAHPALPQMTSQAPQPSVTG). A compositionally biased stretch (polar residues) spans 421–433 (QMTSQAPQPSVTG). 3 coiled-coil regions span residues 522–789 (AVSK…TDQA), 818–878 (DEHL…GVEA), and 925–951 (TLQLLNQQEQEKEESSSEEEEEKAEER). Serine 619 is modified (phosphoserine). Residues 739 to 761 (LEKNLSERKKKSAQERSQAEEEI) are disordered. A disordered region spans residues 931-1219 (QQEQEKEESS…DDDDDIDWLG (289 aa)). 4 positions are modified to phosphoserine: serine 939, serine 940, serine 941, and serine 956. The segment covering 957–971 (QEQSASASSGQPQAP) has biased composition (low complexity). A phosphoserine mark is found at serine 979, serine 1024, serine 1056, serine 1061, serine 1065, and serine 1097. The segment covering 1090-1100 (QESSTRLSLTS) has biased composition (polar residues). A Phosphothreonine modification is found at threonine 1099. Serine 1114 bears the Phosphoserine mark. Positions 1123–1139 (LKKDDVTSSTGPHKELS) are enriched in basic and acidic residues. A phosphoserine mark is found at serine 1158, serine 1161, serine 1162, serine 1164, and serine 1195. Phosphothreonine is present on threonine 1203. The segment covering 1207-1219 (GDDDDDDDIDWLG) has biased composition (acidic residues).

This sequence belongs to the FKBP-type PPIase family. In terms of assembly, interacts with WIP and actin. Interacts with TBC1D23.

It localises to the cytoplasm. The protein resides in the cell projection. The protein localises to the axon. It is found in the early endosome. In terms of biological role, may be involved in the cytoskeletal organization of neuronal growth cones. Seems to be inactive as a PPIase. Involved in the transport of early endosomes at the level of transition between microfilament-based and microtubule-based movement. The sequence is that of FK506-binding protein 15 (FKBP15) from Homo sapiens (Human).